The following is a 309-amino-acid chain: Elongation factor Ts (309 aa).

The involved in Mg(2+) ion dislocation from EF-Tu stretch occupies residues 82 to 85 (TDFV).

It belongs to the EF-Ts family.

The protein localises to the cytoplasm. Functionally, associates with the EF-Tu.GDP complex and induces the exchange of GDP to GTP. It remains bound to the aminoacyl-tRNA.EF-Tu.GTP complex up to the GTP hydrolysis stage on the ribosome. This is Elongation factor Ts from Rickettsia rickettsii (strain Iowa).